The following is a 530-amino-acid chain: Histone-arginine methyltransferase CARMER (530 aa).

Residues 141 to 450 (ASQYFQFYGY…QSYDVTIDLH (310 aa)) enclose the SAM-dependent MTase PRMT-type domain. S-adenosyl-L-methionine contacts are provided by Q154, R163, G187, E209, E238, and T266. Asymmetric dimethylarginine; by autocatalysis is present on R501.

This sequence belongs to the class I-like SAM-binding methyltransferase superfamily. Protein arginine N-methyltransferase family. As to quaternary structure, homodimer. The dimethylated protein is the major form.

It is found in the cytoplasm. It localises to the nucleus. The catalysed reaction is L-arginyl-[protein] + 2 S-adenosyl-L-methionine = N(omega),N(omega)-dimethyl-L-arginyl-[protein] + 2 S-adenosyl-L-homocysteine + 2 H(+). In terms of biological role, methylates (mono- and asymmetric dimethylation) the guanidino nitrogens of arginyl residues in proteins. May methylate histone H3 at 'Arg-17' and activate transcription via chromatin remodeling. The protein is Histone-arginine methyltransferase CARMER (Art4) of Drosophila yakuba (Fruit fly).